The primary structure comprises 122 residues: Large ribosomal subunit protein bL19 (122 aa).

It belongs to the bacterial ribosomal protein bL19 family.

Its function is as follows. This protein is located at the 30S-50S ribosomal subunit interface and may play a role in the structure and function of the aminoacyl-tRNA binding site. This chain is Large ribosomal subunit protein bL19 (rplS), found in Synechocystis sp. (strain ATCC 27184 / PCC 6803 / Kazusa).